We begin with the raw amino-acid sequence, 429 residues long: Glutamate-1-semialdehyde 2,1-aminomutase 1 (429 aa).

The residue at position 267 (Lys267) is an N6-(pyridoxal phosphate)lysine.

It belongs to the class-III pyridoxal-phosphate-dependent aminotransferase family. HemL subfamily. Homodimer. The cofactor is pyridoxal 5'-phosphate.

Its subcellular location is the cytoplasm. It catalyses the reaction (S)-4-amino-5-oxopentanoate = 5-aminolevulinate. It functions in the pathway porphyrin-containing compound metabolism; protoporphyrin-IX biosynthesis; 5-aminolevulinate from L-glutamyl-tRNA(Glu): step 2/2. The polypeptide is Glutamate-1-semialdehyde 2,1-aminomutase 1 (Staphylococcus carnosus (strain TM300)).